The following is a 338-amino-acid chain: NLP effector protein 6 (338 aa).

Residues 1 to 19 (MRFTTIFWISLTVLATVRA) form the signal peptide. Residues 68–119 (LTLSPSASSPAKRNVTLPPDTTMRPDPRQTEPPTEAPTPASTPAPTPDPGPW) are disordered. An N-linked (GlcNAc...) asparagine glycan is attached at Asn-81. Residues 101–117 (TEAPTPASTPAPTPDPG) are compositionally biased toward pro residues. Positions 205-215 (AIMYSWYFPKD) match the Conserved undecapeptide motif I motif. The Hepta-peptide GHRHDWE motif II signature appears at 222-227 (GHRHDW).

The protein belongs to the Necrosis inducing protein (NPP1) family.

It is found in the secreted. Functionally, secreted effector that contributes strongly to virulence during infection by P.capsici. Causes large necrotic areas in both host C.annuum and non-host N.benthamiana. The sequence is that of NLP effector protein 6 from Phytophthora capsici.